The chain runs to 177 residues: Mitochondrial inner membrane protease subunit 2 (177 aa).

The helical transmembrane segment at Phe19 to Ala37 threads the bilayer. Active-site residues include Ser43 and Lys91.

It belongs to the peptidase S26 family. IMP2 subfamily. As to quaternary structure, heterodimer of 2 subunits, IMMPL1 and IMMPL2.

The protein resides in the mitochondrion inner membrane. Its function is as follows. Catalyzes the removal of transit peptides required for the targeting of proteins from the mitochondrial matrix, across the inner membrane, into the inter-membrane space. Known to process the nuclear encoded protein DIABLO. The sequence is that of Mitochondrial inner membrane protease subunit 2 (IMMP2L) from Bos taurus (Bovine).